Reading from the N-terminus, the 672-residue chain is Acetyl-coenzyme A synthetase (672 aa).

CoA is bound by residues 217-220 (RRGK) and Thr-335. Residues 411 to 413 (GEP), 435 to 440 (DTWWQT), Asp-529, Arg-544, and Arg-555 contribute to the ATP site. Mg(2+)-binding residues include Val-566, His-568, and Ile-571. Arg-613 is a CoA binding site. An N6-acetyllysine modification is found at Lys-638.

It belongs to the ATP-dependent AMP-binding enzyme family. It depends on Mg(2+) as a cofactor. Post-translationally, acetylated. Deacetylation by the SIR2-homolog deacetylase activates the enzyme. The N-terminus is blocked.

It catalyses the reaction acetate + ATP + CoA = acetyl-CoA + AMP + diphosphate. In terms of biological role, catalyzes the conversion of acetate into acetyl-CoA (AcCoA), an essential intermediate at the junction of anabolic and catabolic pathways. AcsA undergoes a two-step reaction. In the first half reaction, AcsA combines acetate with ATP to form acetyl-adenylate (AcAMP) intermediate. In the second half reaction, it can then transfer the acetyl group from AcAMP to the sulfhydryl group of CoA, forming the product AcCoA. In Methanothrix soehngenii (Methanosaeta concilii), this protein is Acetyl-coenzyme A synthetase.